Consider the following 505-residue polypeptide: MVSIRPDEISSILKQQITDYDQSVSVSNVGTVLQIGDGIARIYGLDQVMAGELLEFEDGTEGIALNLEDDNVGAVLMGEALGVQEGSNVKSTGKIASVPVGEAMQGRVVNPLGQPIDGKGEIPTSDTRLIEEMAPGIIKRRSVHEPMQTGITSIDAMIPVGRGQRELIIGDRQTGKSAIAIDTIINQKGQDVVCVYVAIGQKSASVANVVEVLREKGALDYTIVVSAGASEAAALQYLAPYTGAAIAEHFMYQGKATLVIYDDLTKQAQAYRQMSLLLRRPPGREAYPGDVFYCHSRLLERAAKLSDDMGGGSMTALPIIETQAGDVSAYIPTNVISITDGQIFLSADLFNSGLRPAINVGISVSRVGGAAQTKAIKKIAGTLKLELAQFDELAAFSQFASDLDEATQQQLERGKRLRELLKQAQFSPLNLAEQVAVVYAGVKGLIDEVPVEDVTKFAAELREYLKLNKAEFIEEILKEKKLNDGLEATLKEVIKEVKSSMLATV.

Residue 170–177 (GDRQTGKS) coordinates ATP.

It belongs to the ATPase alpha/beta chains family. As to quaternary structure, F-type ATPases have 2 components, CF(1) - the catalytic core - and CF(0) - the membrane proton channel. CF(1) has five subunits: alpha(3), beta(3), gamma(1), delta(1), epsilon(1). CF(0) has four main subunits: a(1), b(1), b'(1) and c(9-12).

Its subcellular location is the cellular thylakoid membrane. It carries out the reaction ATP + H2O + 4 H(+)(in) = ADP + phosphate + 5 H(+)(out). Produces ATP from ADP in the presence of a proton gradient across the membrane. The alpha chain is a regulatory subunit. This is ATP synthase subunit alpha from Prochlorococcus marinus (strain MIT 9312).